The chain runs to 1207 residues: Dermatan-sulfate epimerase-like protein (1207 aa).

The N-terminal stretch at 1 to 22 (MAFMFTEHLLFLTLMMCSFSTC) is a signal peptide. N-linked (GlcNAc...) asparagine glycans are attached at residues N28, N661, N683, and N704. 2 helical membrane passes run 761–781 (FPFG…SLVI) and 798–818 (CVLI…WSTC). Residue N869 is glycosylated (N-linked (GlcNAc...) asparagine).

The protein belongs to the dermatan-sulfate isomerase family.

The protein resides in the membrane. The chain is Dermatan-sulfate epimerase-like protein (Dsel) from Mus musculus (Mouse).